We begin with the raw amino-acid sequence, 405 residues long: L-cysteine:1D-myo-inositol 2-amino-2-deoxy-alpha-D-glucopyranoside ligase (405 aa).

C43 is a Zn(2+) binding site. L-cysteinyl-5'-AMP contacts are provided by residues 43–46 (CGIT), T58, and 81–83 (NIT). Residues 45–55 (ITPYDATHLGH) carry the 'HIGH' region motif. The short motif at 187 to 192 (ERGGDP) is the 'ERGGDP' region element. W227 is a binding site for L-cysteinyl-5'-AMP. Position 231 (C231) interacts with Zn(2+). An L-cysteinyl-5'-AMP-binding site is contributed by 249 to 251 (GSD). Residue H256 participates in Zn(2+) binding. I283 is a binding site for L-cysteinyl-5'-AMP. The 'KMSKS' region signature appears at 289–293 (KMSKS).

Belongs to the class-I aminoacyl-tRNA synthetase family. MshC subfamily. In terms of assembly, monomer. Zn(2+) serves as cofactor.

The catalysed reaction is 1D-myo-inositol 2-amino-2-deoxy-alpha-D-glucopyranoside + L-cysteine + ATP = 1D-myo-inositol 2-(L-cysteinylamino)-2-deoxy-alpha-D-glucopyranoside + AMP + diphosphate + H(+). Functionally, catalyzes the ATP-dependent condensation of GlcN-Ins and L-cysteine to form L-Cys-GlcN-Ins. The chain is L-cysteine:1D-myo-inositol 2-amino-2-deoxy-alpha-D-glucopyranoside ligase from Nakamurella multipartita (strain ATCC 700099 / DSM 44233 / CIP 104796 / JCM 9543 / NBRC 105858 / Y-104) (Microsphaera multipartita).